Reading from the N-terminus, the 255-residue chain is F-box/SPRY domain-containing protein 1 (255 aa).

The F-box domain occupies Asp-3 to His-51. The 193-residue stretch at Leu-61 to Leu-253 folds into the B30.2/SPRY domain.

It belongs to the FBXO45/Fsn family. As to quaternary structure, component of an E3 ubiquitin ligase complex composed of hiw and Fsn.

The protein localises to the synapse. It functions in the pathway protein modification; protein ubiquitination. Required in the presynaptic motoneuron to down-regulate the levels of wnd and restrain synaptic terminal growth at the neuromuscular junction (NMJ). This Drosophila yakuba (Fruit fly) protein is F-box/SPRY domain-containing protein 1.